A 420-amino-acid chain; its full sequence is Pre-mRNA-splicing factor RBM22 (420 aa).

N-acetylalanine is present on Ala-2. Phosphoserine is present on residues Ser-4 and Ser-102. Residues Lys-139 and Lys-149 each participate in a glycyl lysine isopeptide (Lys-Gly) (interchain with G-Cter in SUMO2) cross-link. The segment at 159–186 (RNRPHICSFWVKGECKRGEECPYRHEKP) adopts a C3H1-type zinc-finger fold. Lys-212 bears the N6-acetyllysine mark. One can recognise an RRM domain in the interval 232–305 (TTLYVGGLGD…RRLNVKWGRS (74 aa)). Residue Lys-290 forms a Glycyl lysine isopeptide (Lys-Gly) (interchain with G-Cter in SUMO2) linkage. Disordered regions lie at residues 303-343 (GRSQ…AAEE) and 372-420 (APPP…HSSP). Residues 309-318 (RGKEKEKDGT) are compositionally biased toward basic and acidic residues.

Belongs to the SLT11 family. As to quaternary structure, component of the pre-catalytic and catalytic spliceosome complexes. Component of the postcatalytic spliceosome P complex. Interacts with PDCD6; the interaction induces translocation of PDCD6 in the cytoplasm. Interacts with PPIL1.

It localises to the nucleus. It is found in the cytoplasm. Functionally, required for pre-mRNA splicing as component of the activated spliceosome. Involved in the first step of pre-mRNA splicing. Binds directly to the internal stem-loop (ISL) domain of the U6 snRNA and to the pre-mRNA intron near the 5' splice site during the activation and catalytic phases of the spliceosome cycle. Involved in both translocations of the nuclear SLU7 to the cytoplasm and the cytosolic calcium-binding protein PDCD6 to the nucleus upon cellular stress responses. The chain is Pre-mRNA-splicing factor RBM22 (RBM22) from Bos taurus (Bovine).